Here is a 222-residue protein sequence, read N- to C-terminus: C-reactive protein (222 aa).

Positions 1-19 (MEKLSLCLLVIISLSNAFA) are cleaved as a signal peptide. Position 20 is a pyrrolidone carboxylic acid (Q20). The Pentraxin (PTX) domain maps to 24–222 (IGKAFVFPKE…EVYVKPQLWP (199 aa)). Cysteines 55 and 113 form a disulfide. Ca(2+) contacts are provided by N78, E154, Q155, D156, and Q166.

Belongs to the pentraxin family. As to quaternary structure, homopentamer. Pentraxin (or pentaxin) have a discoid arrangement of 5 non-covalently bound subunits. Interacts with FCN1; may regulate monocyte activation by FCN1. The cofactor is Ca(2+). In terms of tissue distribution, found in plasma.

It localises to the secreted. In terms of biological role, displays several functions associated with host defense: it promotes agglutination, bacterial capsular swelling, phagocytosis and complement fixation through its calcium-dependent binding to phosphorylcholine. Can interact with DNA and histones and may scavenge nuclear material released from damaged circulating cells. This Sus scrofa (Pig) protein is C-reactive protein (CRP).